The primary structure comprises 96 residues: Basic blue protein (96 aa).

One can recognise a Phytocyanin domain in the interval 1–96; sequence AVYVVGGSGG…SGMKIAVNAL (96 aa). Positions 39, 79, 84, and 89 each coordinate Cu cation. Cysteine 52 and cysteine 85 form a disulfide bridge.

The polypeptide is Basic blue protein (Cucumis sativus (Cucumber)).